We begin with the raw amino-acid sequence, 633 residues long: DNA repair protein XRCC1 (633 aa).

Position 140 is a phosphoserine (Ser-140). Lys-176 is covalently cross-linked (Glycyl lysine isopeptide (Lys-Gly) (interchain with G-Cter in SUMO1); alternate). Residue Lys-176 forms a Glycyl lysine isopeptide (Lys-Gly) (interchain with G-Cter in SUMO2); alternate linkage. Residue Thr-198 is modified to Phosphothreonine. A Phosphoserine modification is found at Ser-199. Thr-202 carries the post-translational modification Phosphothreonine. Phosphoserine occurs at positions 204, 226, and 241. The segment covering Ala-221 to Ala-231 has biased composition (low complexity). Residues Ala-221–Pro-313 form a disordered region. A compositionally biased stretch (basic and acidic residues) spans Glu-240–Thr-257. A Phosphothreonine modification is found at Thr-257. A phosphoserine mark is found at Ser-259 and Ser-266. Low complexity predominate over residues Ala-277–Ala-291. Position 281 is a phosphothreonine (Thr-281). Residues Pro-299–Pro-313 show a composition bias toward basic and acidic residues. In terms of domain architecture, BRCT 1 spans Glu-315 to Met-403. Residue Ser-371 is modified to Phosphoserine; by PRKDC. Disordered stretches follow at residues Arg-400–Pro-462, Glu-471–Asp-490, and Gln-498–Val-536. Ser-408, Ser-409, Ser-410, and Ser-421 each carry phosphoserine. The span at Lys-427–Ala-443 shows a compositional bias: low complexity. 2 positions are modified to phosphoserine: Ser-446 and Ser-447. 2 positions are modified to phosphothreonine: Thr-453 and Thr-457. 2 positions are modified to phosphoserine: Ser-461 and Ser-485. Over residues Gly-481–Asp-490 the composition is skewed to acidic residues. A Phosphothreonine modification is found at Thr-488. Residue Ser-518 is modified to Phosphoserine. Thr-519 and Thr-523 each carry phosphothreonine. The region spanning Glu-538–Val-629 is the BRCT 2 domain.

In terms of assembly, homodimer. Interacts with polynucleotide kinase (PNK), DNA polymerase-beta (POLB) and DNA ligase III (LIG3). Interacts with APTX and APLF. Interacts with APEX1; the interaction is induced by SIRT1 and increases with the acetylated form of APEX1. Interacts with (poly-ADP-ribosylated) PARP1. Post-translationally, phosphorylation of Ser-371 causes dimer dissociation. Phosphorylation by CK2 promotes interaction with APTX and APLF. Sumoylated. Expressed in fibroblasts, retinal pigmented epithelial cells and lymphoblastoid cells (at protein level).

It is found in the nucleus. It localises to the chromosome. Functionally, scaffold protein involved in DNA single-strand break repair by mediating the assembly of DNA break repair protein complexes. Negatively regulates ADP-ribosyltransferase activity of PARP1 during base-excision repair in order to prevent excessive PARP1 activity. Recognizes and binds poly-ADP-ribose chains: specifically binds auto-poly-ADP-ribosylated PARP1, limiting its activity. This Homo sapiens (Human) protein is DNA repair protein XRCC1.